Consider the following 1935-residue polypeptide: Myosin-7 (1935 aa).

The Myosin N-terminal SH3-like domain maps to 32-81 (DLKKDVYVPDDKEEFVKAKILSREGGKVTAETEHGKTVTVKEDQVLQQNP). Residues 85 to 778 (DKIEDMAMLT…LLGLLEEMRD (694 aa)) form the Myosin motor domain. Position 129 is an N6,N6,N6-trimethyllysine (Lys-129). Position 178-185 (178-185 (GESGAGKT)) interacts with ATP. The residue at position 378 (Thr-378) is a Phosphothreonine. 2 actin-binding regions span residues 655–677 (LNKLMTNLRSTHPHFVRCIIPNE) and 757–771 (KFGHTKVFFKAGLLG). Residues 781-810 (LSRIITRIQAQSRGVLSRMEFKKLLERRDS) enclose the IQ domain. The stretch at 839–1935 (LLKSAETEKE…DIGTKGLNEE (1097 aa)) forms a coiled coil. Residues Ser-1137 and Ser-1269 each carry the phosphoserine modification. A Phosphothreonine modification is found at Thr-1282. The residue at position 1308 (Tyr-1308) is a Phosphotyrosine. Residue Thr-1309 is modified to Phosphothreonine. The residue at position 1510 (Ser-1510) is a Phosphoserine. Residue Thr-1513 is modified to Phosphothreonine. The interval 1907 to 1935 (EERADIAESQVNKLRAKSRDIGTKGLNEE) is disordered. The span at 1923–1935 (KSRDIGTKGLNEE) shows a compositional bias: basic and acidic residues.

This sequence belongs to the TRAFAC class myosin-kinesin ATPase superfamily. Myosin family. Muscle myosin is a hexameric protein that consists of 2 heavy chain subunits (MHC), 2 alkali light chain subunits (MLC) and 2 regulatory light chain subunits (MLC-2). Interacts with ECPAS. Interacts (via C-terminus) with LRRC39.

It localises to the cytoplasm. It is found in the myofibril. The protein resides in the sarcomere. Its function is as follows. Myosins are actin-based motor molecules with ATPase activity essential for muscle contraction. Forms regular bipolar thick filaments that, together with actin thin filaments, constitute the fundamental contractile unit of skeletal and cardiac muscle. This is Myosin-7 (MYH7) from Sus scrofa (Pig).